Reading from the N-terminus, the 62-residue chain is MAKRCALTFKGPMIGNHVSHANNKNKRRLLPNLRSIKIQLDDGTTKRIKVAASTLRTMRKGA.

Belongs to the bacterial ribosomal protein bL28 family.

This Helicobacter pylori (strain P12) protein is Large ribosomal subunit protein bL28.